The chain runs to 92 residues: Small ribosomal subunit protein bS20 (92 aa).

Basic and acidic residues predominate over residues methionine 1–asparagine 21. 2 disordered regions span residues methionine 1–lysine 26 and alanine 73–serine 92. The span at lysine 82–serine 92 shows a compositional bias: polar residues.

Belongs to the bacterial ribosomal protein bS20 family.

Binds directly to 16S ribosomal RNA. The polypeptide is Small ribosomal subunit protein bS20 (Chlorobaculum tepidum (strain ATCC 49652 / DSM 12025 / NBRC 103806 / TLS) (Chlorobium tepidum)).